The sequence spans 237 residues: Ribose-5-phosphate isomerase A (237 aa).

Substrate contacts are provided by residues 30–33, 87–90, and 100–103; these read SGST, DGAD, and KGGG. The active-site Proton acceptor is glutamate 109. Substrate is bound at residue lysine 127.

The protein belongs to the ribose 5-phosphate isomerase family. In terms of assembly, homodimer.

It carries out the reaction aldehydo-D-ribose 5-phosphate = D-ribulose 5-phosphate. It functions in the pathway carbohydrate degradation; pentose phosphate pathway; D-ribose 5-phosphate from D-ribulose 5-phosphate (non-oxidative stage): step 1/1. Functionally, catalyzes the reversible conversion of ribose-5-phosphate to ribulose 5-phosphate. This chain is Ribose-5-phosphate isomerase A, found in Synechococcus sp. (strain RCC307).